The chain runs to 95 residues: Immunogenic miracidial antigen 8C (95 aa).

The span at 1 to 15 (EFTISFSSPVISTGQ) shows a compositional bias: polar residues. The disordered stretch occupies residues 1 to 95 (EFTISFSSPV…PKKYGSGHKY (95 aa)). Over residues 20–41 (GDEDYHDGDDDVDYTDDVDDVD) the composition is skewed to acidic residues. Residues 45 to 59 (GSPSQLLQGGYQRNQ) show a composition bias toward polar residues.

It belongs to the immunogenic miracidial antigen family.

This Schistosoma japonicum (Blood fluke) protein is Immunogenic miracidial antigen 8C (8C).